A 78-amino-acid chain; its full sequence is Acyl carrier protein (78 aa).

One can recognise a Carrier domain in the interval 2–77; it reads STIEERVKKI…AAIDYINGHQ (76 aa). Ser-37 carries the post-translational modification O-(pantetheine 4'-phosphoryl)serine.

The protein belongs to the acyl carrier protein (ACP) family. Post-translationally, 4'-phosphopantetheine is transferred from CoA to a specific serine of apo-ACP by AcpS. This modification is essential for activity because fatty acids are bound in thioester linkage to the sulfhydryl of the prosthetic group.

The protein resides in the cytoplasm. Its pathway is lipid metabolism; fatty acid biosynthesis. Functionally, carrier of the growing fatty acid chain in fatty acid biosynthesis. The protein is Acyl carrier protein of Erwinia tasmaniensis (strain DSM 17950 / CFBP 7177 / CIP 109463 / NCPPB 4357 / Et1/99).